The sequence spans 238 residues: Ribosomal RNA small subunit methyltransferase G (238 aa).

S-adenosyl-L-methionine-binding positions include Gly77, Phe82, 128–129, and Arg147; that span reads AE.

It belongs to the methyltransferase superfamily. RNA methyltransferase RsmG family.

Its subcellular location is the cytoplasm. Its function is as follows. Specifically methylates the N7 position of guanine in position 535 of 16S rRNA. In Listeria welshimeri serovar 6b (strain ATCC 35897 / DSM 20650 / CCUG 15529 / CIP 8149 / NCTC 11857 / SLCC 5334 / V8), this protein is Ribosomal RNA small subunit methyltransferase G.